The sequence spans 238 residues: Probable transcriptional regulatory protein YeeN (238 aa).

The protein belongs to the TACO1 family. YeeN subfamily.

It localises to the cytoplasm. The protein is Probable transcriptional regulatory protein YeeN of Salmonella typhimurium (strain LT2 / SGSC1412 / ATCC 700720).